We begin with the raw amino-acid sequence, 299 residues long: Ribosomal RNA small subunit methyltransferase H (299 aa).

S-adenosyl-L-methionine is bound by residues 32–34 (AGH), Asp52, Phe79, Asp100, and Gln107.

Belongs to the methyltransferase superfamily. RsmH family.

It is found in the cytoplasm. The enzyme catalyses cytidine(1402) in 16S rRNA + S-adenosyl-L-methionine = N(4)-methylcytidine(1402) in 16S rRNA + S-adenosyl-L-homocysteine + H(+). In terms of biological role, specifically methylates the N4 position of cytidine in position 1402 (C1402) of 16S rRNA. The chain is Ribosomal RNA small subunit methyltransferase H from Mycoplasmopsis pulmonis (strain UAB CTIP) (Mycoplasma pulmonis).